Reading from the N-terminus, the 421-residue chain is Gamma-glutamyl phosphate reductase (421 aa).

Belongs to the gamma-glutamyl phosphate reductase family.

It is found in the cytoplasm. It carries out the reaction L-glutamate 5-semialdehyde + phosphate + NADP(+) = L-glutamyl 5-phosphate + NADPH + H(+). Its pathway is amino-acid biosynthesis; L-proline biosynthesis; L-glutamate 5-semialdehyde from L-glutamate: step 2/2. Its function is as follows. Catalyzes the NADPH-dependent reduction of L-glutamate 5-phosphate into L-glutamate 5-semialdehyde and phosphate. The product spontaneously undergoes cyclization to form 1-pyrroline-5-carboxylate. The chain is Gamma-glutamyl phosphate reductase from Acinetobacter baylyi (strain ATCC 33305 / BD413 / ADP1).